A 255-amino-acid chain; its full sequence is Electron transfer flavoprotein subunit beta (255 aa).

Ala2 bears the N-acetylalanine mark. AMP-binding positions include Ala9, 39-42, Cys66, and 123-134; these read NPFC and GKQAIDDDCNQT. Residues 183-205 are recognition loop; it reads ADLRLNEPRYATLPNIMKAKKKK. N6,N6,N6-trimethyllysine; by ETFBKMT; alternate is present on Lys200. Lys200 is modified (N6-acetyllysine; alternate). Lys200 carries the N6-methyllysine; alternate modification. Residue Lys203 is modified to N6,N6,N6-trimethyllysine; by ETFBKMT. Position 210 is an N6-acetyllysine; alternate (Lys210). At Lys210 the chain carries N6-succinyllysine; alternate. Phosphoserine occurs at positions 223 and 226. Residue Lys238 is modified to N6-acetyllysine. Lys248 is modified (N6-acetyllysine; alternate). An N6-succinyllysine; alternate modification is found at Lys248.

Belongs to the ETF beta-subunit/FixA family. Heterodimer composed of ETFA and ETFB. Identified in a complex that contains ETFA, ETFB and ETFRF1. Interacts with ACADM. Post-translationally, methylated. Trimethylation at Lys-200 and Lys-203 may negatively regulate the activity in electron transfer from acyl-CoA dehydrogenases.

The protein resides in the mitochondrion matrix. Heterodimeric electron transfer flavoprotein that accepts electrons from several mitochondrial dehydrogenases, including acyl-CoA dehydrogenases, glutaryl-CoA and sarcosine dehydrogenase. It transfers the electrons to the main mitochondrial respiratory chain via ETF-ubiquinone oxidoreductase. Required for normal mitochondrial fatty acid oxidation and normal amino acid metabolism. ETFB binds an AMP molecule that probably has a purely structural role. This Bos taurus (Bovine) protein is Electron transfer flavoprotein subunit beta.